The chain runs to 435 residues: 5-hydroxybenzimidazole synthase (435 aa).

Substrate-binding positions include Met95, Tyr124, His163, 186–188 (SKG), 227–230 (NGLR), and Glu266. His270 is a binding site for Zn(2+). Tyr293 is a substrate binding site. Residue His334 participates in Zn(2+) binding. Residues Cys410, Cys413, and Cys417 each contribute to the [4Fe-4S] cluster site.

This sequence belongs to the ThiC family. 5-hydroxybenzimidazole synthase subfamily. In terms of assembly, homodimer. Requires [4Fe-4S] cluster as cofactor.

The catalysed reaction is 5-amino-1-(5-phospho-beta-D-ribosyl)imidazole + AH2 + S-adenosyl-L-methionine = 5-hydroxybenzimidazole + 5'-deoxyadenosine + formate + L-methionine + A + NH4(+) + phosphate + 2 H(+). Its function is as follows. Catalyzes the conversion of aminoimidazole ribotide (AIR) to 5-hydroxybenzimidazole (5-HBI) in a radical S-adenosyl-L-methionine (SAM)-dependent reaction. Is thus involved in the anaerobic biosynthesis of the benzimidazole lower axial ligand of the cobamide produced by G.metallireducens. In Geobacter metallireducens (strain ATCC 53774 / DSM 7210 / GS-15), this protein is 5-hydroxybenzimidazole synthase.